A 339-amino-acid chain; its full sequence is Anthranilate phosphoribosyltransferase (339 aa).

5-phospho-alpha-D-ribose 1-diphosphate is bound by residues glycine 79, 82 to 83, serine 87, 89 to 92, 107 to 115, and serine 119; these read GD, NIST, and KHGNRSVSS. Glycine 79 lines the anthranilate pocket. Serine 91 provides a ligand contact to Mg(2+). Residue asparagine 110 coordinates anthranilate. Arginine 165 is a binding site for anthranilate. Mg(2+) is bound by residues aspartate 224 and glutamate 225.

Belongs to the anthranilate phosphoribosyltransferase family. Homodimer. Mg(2+) is required as a cofactor.

The catalysed reaction is N-(5-phospho-beta-D-ribosyl)anthranilate + diphosphate = 5-phospho-alpha-D-ribose 1-diphosphate + anthranilate. The protein operates within amino-acid biosynthesis; L-tryptophan biosynthesis; L-tryptophan from chorismate: step 2/5. Functionally, catalyzes the transfer of the phosphoribosyl group of 5-phosphorylribose-1-pyrophosphate (PRPP) to anthranilate to yield N-(5'-phosphoribosyl)-anthranilate (PRA). The protein is Anthranilate phosphoribosyltransferase of Exiguobacterium sibiricum (strain DSM 17290 / CCUG 55495 / CIP 109462 / JCM 13490 / 255-15).